The primary structure comprises 153 residues: Endoribonuclease YbeY (153 aa).

Histidine 114, histidine 118, and histidine 124 together coordinate Zn(2+).

The protein belongs to the endoribonuclease YbeY family. Zn(2+) is required as a cofactor.

The protein resides in the cytoplasm. Single strand-specific metallo-endoribonuclease involved in late-stage 70S ribosome quality control and in maturation of the 3' terminus of the 16S rRNA. In Shewanella baltica (strain OS223), this protein is Endoribonuclease YbeY.